The sequence spans 277 residues: RAD52 motif-containing protein 1 (277 aa).

One can recognise an RRM domain in the interval 15-95 (QTLLVWGLEP…SPLKVCVCTK (81 aa)).

Homodimer.

The protein resides in the nucleus. Its subcellular location is the cytoplasm. It is found in the nucleolus. Its function is as follows. Confers resistance to the antitumor agent cisplatin. Binds preferentially to sites of DNA modified by cisplatin in vitro. Binds to double-stranded DNA in a cooperative manner resulting in the formation of filament-like structures. Binds to single-stranded DNA with no cooperativity. Binds to RNA. The chain is RAD52 motif-containing protein 1 (RDM1) from Gallus gallus (Chicken).